The chain runs to 305 residues: tRNA dimethylallyltransferase (305 aa).

Position 13-20 (13-20 (GPTSSGKT)) interacts with ATP. 15–20 (TSSGKT) lines the substrate pocket. The interaction with substrate tRNA stretch occupies residues 39-42 (DSKQ).

It belongs to the IPP transferase family. In terms of assembly, monomer. Requires Mg(2+) as cofactor.

The enzyme catalyses adenosine(37) in tRNA + dimethylallyl diphosphate = N(6)-dimethylallyladenosine(37) in tRNA + diphosphate. In terms of biological role, catalyzes the transfer of a dimethylallyl group onto the adenine at position 37 in tRNAs that read codons beginning with uridine, leading to the formation of N6-(dimethylallyl)adenosine (i(6)A). This Neorickettsia sennetsu (strain ATCC VR-367 / Miyayama) (Ehrlichia sennetsu) protein is tRNA dimethylallyltransferase.